Reading from the N-terminus, the 934-residue chain is MPHRAASPAMSENEFDITGALFQNDSDSDNEQPSAKSKRQPPKKVPSQALDFLGDVNEDDDDDEAFIAEQQTSANRKASNLKGRTVKKGGGFQAMGLSANLLKAIARKGFSVPTPIQRKTIPVIMDDQDVVGMARTGSGKTAAFVIPMIEKLKSHSTKVGARGLILSPSRELALQTLKVVKELGRGTDLKSVLLVGGDSLEEQFAMMAGNPDIVIATPGRFLHLKVEMNLDLSSIRYVVFDEADRLFEMGFAAQLTEILHGLPANRQTLLFSATLPKSLVEFARAGLQEPTLVRLDTESKISPDLQNAFFSVKSSEKEGALLYILQEVIKMPTGPTEVSQQRKEEDASAKNWKNKKRKRAEMEKAVNMRESPTKHSTIVFAATKHHVDYLYSLLSEAGFAVSYVYGSLDQTARKIQVQNFRTGMTNILVVTDVAARGIDIPILANVINYDFPSQPKIFIHRVGRTARAGRKGWSYSLVRDADAPYLLDLQLFLGRRLVVGREFGDQVNFAEDVVTGSLPRDGLSQSCEWVTKVLDDNADLAAQRTVAAKGEKLYMRTRNSASLESAKRSKQVVSSDNWTSIHPLFQDETSNLEAEREKMLARIGGYRPPETIFEVNNRRMGKHENVDALDTIKRVRTTLESKKKRAQANEKSEFLEDASDDEKAANEAGENENEGAFSDEDDDVPTGVADNMSMASDSELEVTFSSYSQSKENKAKKASAASFQNPEYFMSYTPNNNSLVEDRAYGVHSGTNSNFAQASRSATMDLAGDDGGRGFGEARTLMRWDKRHKKYVARQNDEDGSKGTRLVRGESGAKIAASFRSGRFDAWKRGNRLGRLPRVGEAEAPNLTAGLNAAISGKRFRHRKEQAPKRADPLRGDYEKMKKKAELAKERAMSKAGGAAPRGKSELKNTDDIRIARKLKQKRREKNARPSRKK.

The disordered stretch occupies residues 1 to 57; sequence MPHRAASPAMSENEFDITGALFQNDSDSDNEQPSAKSKRQPPKKVPSQALDFLGDVN. Positions 21-35 are enriched in polar residues; that stretch reads LFQNDSDSDNEQPSA. The Q motif signature appears at 90–118; it reads GGFQAMGLSANLLKAIARKGFSVPTPIQR. A Helicase ATP-binding domain is found at 121–293; that stretch reads IPVIMDDQDV…RAGLQEPTLV (173 aa). Position 134–141 (134–141) interacts with ATP; the sequence is ARTGSGKT. Residues 241–244 carry the DEAD box motif; the sequence is DEAD. The interval 334–358 is disordered; the sequence is GPTEVSQQRKEEDASAKNWKNKKRK. Residues 361-515 form the Helicase C-terminal domain; that stretch reads EMEKAVNMRE…QVNFAEDVVT (155 aa). The segment covering 639 to 654 has biased composition (basic and acidic residues); the sequence is LESKKKRAQANEKSEF. 2 disordered regions span residues 639–688 and 854–934; these read LESK…PTGV and AISG…SRKK. Acidic residues predominate over residues 669–684; that stretch reads GENENEGAFSDEDDDV. 2 stretches are compositionally biased toward basic and acidic residues: residues 865–893 and 903–915; these read EQAP…ERAM and GKSE…DIRI. Residues 916-934 are compositionally biased toward basic residues; that stretch reads ARKLKQKRREKNARPSRKK.

The protein belongs to the DEAD box helicase family. DDX54/DBP10 subfamily.

The protein localises to the nucleus. It localises to the nucleolus. It catalyses the reaction ATP + H2O = ADP + phosphate + H(+). In terms of biological role, ATP-binding RNA helicase involved in the biogenesis of 60S ribosomal subunits and is required for the normal formation of 25S and 5.8S rRNAs. The sequence is that of ATP-dependent RNA helicase dbp10 (dbp10) from Neosartorya fischeri (strain ATCC 1020 / DSM 3700 / CBS 544.65 / FGSC A1164 / JCM 1740 / NRRL 181 / WB 181) (Aspergillus fischerianus).